Consider the following 755-residue polypeptide: Probable ubiquitin carboxyl-terminal hydrolase creB (755 aa).

A disordered region spans residues 1–32 (MGSFLRSLRRDVGPPTPSVGATPAKKEPPVPP). In terms of domain architecture, USP spans 55–468 (FGMENYGNTC…CAYVLFYQET (414 aa)). Catalysis depends on Cys64, which acts as the Nucleophile. 2 disordered regions span residues 119-146 (EKQK…DSPE) and 237-270 (EASK…TPNT). Residues 237-246 (EASKQPEPER) show a composition bias toward basic and acidic residues. A compositionally biased stretch (polar residues) spans 254-270 (ADSTELSGSSGSKTPNT). His419 functions as the Proton acceptor in the catalytic mechanism. The interval 495-755 (TLKQNGYPLS…LKKKSFSILS (261 aa)) is disordered. Positions 547–560 (ESSPADPSTTASAT) are enriched in low complexity. Positions 577-648 (KKSDSHFKKE…RRHSPDDTKK (72 aa)) are enriched in basic and acidic residues. A coiled-coil region spans residues 581-630 (SHFKKERAKEEKERKANEKEKEKQRRRDQEARIREQRREDAEIRAALEAS). Basic residues predominate over residues 654–666 (SRLKRGSKSFSHR). The span at 693–709 (NGASESQQQLPNGQSPG) shows a compositional bias: polar residues. A compositionally biased stretch (basic and acidic residues) spans 718 to 733 (TGLDEERDTLKDPKHD). Residues 734–755 (RSGHHGKWRSFSLKKKSFSILS) are compositionally biased toward basic residues.

It belongs to the peptidase C19 family. As to quaternary structure, interacts with creA, creC and qutD.

It carries out the reaction Thiol-dependent hydrolysis of ester, thioester, amide, peptide and isopeptide bonds formed by the C-terminal Gly of ubiquitin (a 76-residue protein attached to proteins as an intracellular targeting signal).. In terms of biological role, ubiquitin thioesterase component of the regulatory network controlling carbon source utilization through ubiquitination and deubiquitination involving creA, creB, creC, creD and acrB. Deubiquitinates the creA catabolic repressor and the quinate permease qutD. Also plays a role in response to carbon starvation and the control of extracellular proteases activity. This chain is Probable ubiquitin carboxyl-terminal hydrolase creB (creB), found in Aspergillus flavus (strain ATCC 200026 / FGSC A1120 / IAM 13836 / NRRL 3357 / JCM 12722 / SRRC 167).